The sequence spans 152 residues: Clitocypin-4/-3 (152 aa).

This sequence belongs to the protease inhibitor I48 family. Homodimer.

Its function is as follows. Binds and inhibits cysteine proteinases. Inhibits most strongly papain and cathepsin L, more weakly bromelain and cathepsin B while it is completely ineffective against cathepsin H. The sequence is that of Clitocypin-4/-3 (clt4) from Clitocybe nebularis (Clouded agaric).